Reading from the N-terminus, the 199-residue chain is Thymidine kinase (199 aa).

Residues 15-22 (GSMFSGKS) and 88-91 (DEIQ) each bind ATP. E89 (proton acceptor) is an active-site residue. Zn(2+) contacts are provided by C145, C148, C183, and H186.

Belongs to the thymidine kinase family. Homotetramer.

The protein localises to the cytoplasm. The enzyme catalyses thymidine + ATP = dTMP + ADP + H(+). The chain is Thymidine kinase from Staphylococcus haemolyticus (strain JCSC1435).